The following is an 805-amino-acid chain: Cation channel sperm-associated auxiliary subunit delta (805 aa).

The first 16 residues, 1-16, serve as a signal peptide directing secretion; the sequence is MLVLMLAAAVATMVRA. Topologically, residues 17 to 723 are extracellular; the sequence is HTLCRVHTVR…ALPVTKFQPL (707 aa). Cystine bridges form between Cys20/Cys366, Cys56/Cys143, Cys142/Cys149, Cys384/Cys493, Cys507/Cys701, Cys522/Cys569, and Cys621/Cys651. Residues Asn227, Asn419, Asn469, Asn535, and Asn627 are each glycosylated (N-linked (GlcNAc...) asparagine). A helical transmembrane segment spans residues 724-745; the sequence is LTILLMVTTTLLTAWLAYAIPK. Residues 746–805 lie on the Cytoplasmic side of the membrane; it reads QLRSEKGQRLLGFCYQILQLCLGVCFCTWLRGKLRQWLRPRRVKDQNRGKVRVAQKHPET.

The protein belongs to the CATSPERD family. As to quaternary structure, component of the CatSper complex or CatSpermasome composed of the core pore-forming members CATSPER1, CATSPER2, CATSPER3 and CATSPER4 as well as auxiliary members CATSPERB, CATSPERG2, CATSPERD, CATSPERE, CATSPERZ, C2CD6/CATSPERT, SLCO6C1, TMEM249, TMEM262 and EFCAB9. HSPA1 may be an additional auxiliary complex member. The core complex members CATSPER1, CATSPER2, CATSPER3 and CATSPER4 form a heterotetrameric channel. The auxiliary CATSPERB, CATSPERG2, CATSPERD and CATSPERE subunits form a pavilion-like structure over the pore which stabilizes the complex through interactions with CATSPER4, CATSPER3, CATSPER1 and CATSPER2 respectively. SLCO6C1 interacts with CATSPERE and TMEM262/CATSPERH interacts with CATSPERB, further stabilizing the complex. C2CD6/CATSPERT interacts at least with CATSPERD and is required for targeting the CatSper complex in the flagellar membrane. As to expression, testis-specific.

Its subcellular location is the cell projection. It is found in the cilium. The protein resides in the flagellum membrane. In terms of biological role, auxiliary component of the CatSper complex, a complex involved in sperm cell hyperactivation. Sperm cell hyperactivation is needed for sperm motility which is essential late in the preparation of sperm for fertilization. Required for CATSPER1 stability before intraflagellar transport and/or incorporation of the CatSper complex channel into the flagellar membrane. The polypeptide is Cation channel sperm-associated auxiliary subunit delta (Mus musculus (Mouse)).